We begin with the raw amino-acid sequence, 36 residues long: MNQLGSGPTKQGVATNTGSTGTTKNNSNLSGKGWVL.

Over residues 1–14 (MNQLGSGPTKQGVA) the composition is skewed to polar residues. The disordered stretch occupies residues 1–36 (MNQLGSGPTKQGVATNTGSTGTTKNNSNLSGKGWVL). Residues 15 to 36 (TNTGSTGTTKNNSNLSGKGWVL) are compositionally biased toward low complexity.

This is an uncharacterized protein from Dictyostelium discoideum (Social amoeba).